The primary structure comprises 113 residues: Large ribosomal subunit protein bL19 (113 aa).

Belongs to the bacterial ribosomal protein bL19 family.

Functionally, this protein is located at the 30S-50S ribosomal subunit interface and may play a role in the structure and function of the aminoacyl-tRNA binding site. In Carboxydothermus hydrogenoformans (strain ATCC BAA-161 / DSM 6008 / Z-2901), this protein is Large ribosomal subunit protein bL19.